A 389-amino-acid polypeptide reads, in one-letter code: Phosphoglycerate kinase (389 aa).

Residues 21-23 (DLN), arginine 36, 59-62 (HLGR), arginine 112, and arginine 145 contribute to the substrate site. Residues lysine 196, glutamate 313, and 342 to 345 (GGDT) each bind ATP.

It belongs to the phosphoglycerate kinase family. Monomer.

It localises to the cytoplasm. It catalyses the reaction (2R)-3-phosphoglycerate + ATP = (2R)-3-phospho-glyceroyl phosphate + ADP. It functions in the pathway carbohydrate degradation; glycolysis; pyruvate from D-glyceraldehyde 3-phosphate: step 2/5. In Mannheimia succiniciproducens (strain KCTC 0769BP / MBEL55E), this protein is Phosphoglycerate kinase.